Here is a 447-residue protein sequence, read N- to C-terminus: Na(+)/H(+) antiporter NhaA 2 (447 aa).

Helical transmembrane passes span 30-50 (FIHIESAAGIVLFISTLLAVL), 81-101 (LHKWVNDAGMTLFFFLIALEL), 117-137 (LLSIAAALGGMSTPPLFYLLL), 146-166 (GWGTVMATDTAFVIGCLALLG), 175-195 (IFMLSMAVVDDIGAIFVVAIG), 199-219 (AVDWLVLSYALLGFMLVRAMA), 220-240 (FLGVRSLVLFSIVGGAIWLVI), 315-335 (LLHPWVGFVVLPLFALANAGV), 350-370 (VFVGFVFGKPIGIVLFSWIAV), 383-403 (WGMVFGGGMLAGIGFTMALFI), and 415-435 (AAKLGIFIASITSALIGFLCL).

The protein belongs to the NhaA Na(+)/H(+) (TC 2.A.33) antiporter family.

It is found in the cell inner membrane. The enzyme catalyses Na(+)(in) + 2 H(+)(out) = Na(+)(out) + 2 H(+)(in). In terms of biological role, na(+)/H(+) antiporter that extrudes sodium in exchange for external protons. In Vibrio vulnificus (strain CMCP6), this protein is Na(+)/H(+) antiporter NhaA 2.